The sequence spans 636 residues: Eukaryotic peptide chain release factor GTP-binding subunit ERF3A (636 aa).

Gly residues-rich tracts occupy residues 1–16 (MDPS…GGGS) and 103–116 (AAGG…GAGG). Disordered regions lie at residues 1 to 54 (MDPS…AAVA) and 90 to 206 (LRGP…PPGA). Over residues 121 to 138 (VESSQDQSCEGSNSTVSM) the composition is skewed to polar residues. Residues 183–193 (STQEMMEEEEE) show a composition bias toward acidic residues. Residues 209-435 (KEHVNVVFIG…DNLPNFNRSV (227 aa)) form the tr-type G domain. Residues 218 to 225 (GHVDAGKS) are G1. Residue 221 to 226 (DAGKST) coordinates GTP. The tract at residues 274–278 (GKTVE) is G2. Positions 295–298 (DAPG) are G3. Residues 357-360 (NKMD) and 399-401 (SGL) contribute to the GTP site. A G4 region spans residues 357–360 (NKMD). Positions 399 to 401 (SGL) are G5.

Belongs to the TRAFAC class translation factor GTPase superfamily. Classic translation factor GTPase family. ERF3 subfamily. In terms of assembly, component of the eRF1-eRF3-GTP ternary complex, composed of ETF1/ERF1 and ERF3 (GSPT1/ERF3A or GSPT2/ERF3B) and GTP. Component of the transient SURF (SMG1-UPF1-eRF1-eRF3) complex. The ETF1-GSPT1 complex interacts with JMJD4. Interacts with PABPC1. Interacts with SHFL.

It catalyses the reaction GTP + H2O = GDP + phosphate + H(+). Its function is as follows. GTPase component of the eRF1-eRF3-GTP ternary complex, a ternary complex that mediates translation termination in response to the termination codons UAA, UAG and UGA. GSPT1/ERF3A mediates ETF1/ERF1 delivery to stop codons: The eRF1-eRF3-GTP complex binds to a stop codon in the ribosomal A-site. GTP hydrolysis by GSPT1/ERF3A induces a conformational change that leads to its dissociation, permitting ETF1/ERF1 to accommodate fully in the A-site. Component of the transient SURF complex which recruits UPF1 to stalled ribosomes in the context of nonsense-mediated decay (NMD) of mRNAs containing premature stop codons. Required for SHFL-mediated translation termination which inhibits programmed ribosomal frameshifting (-1PRF) of mRNA from viruses and cellular genes. This is Eukaryotic peptide chain release factor GTP-binding subunit ERF3A (Gspt1) from Mus musculus (Mouse).